The chain runs to 137 residues: Nucleoside diphosphate kinase (137 aa).

ATP contacts are provided by Lys11, Phe59, Arg87, Thr93, Arg104, and Asn114. The active-site Pros-phosphohistidine intermediate is the His117.

Belongs to the NDK family. As to quaternary structure, homotetramer. Mg(2+) serves as cofactor.

The protein localises to the cytoplasm. The enzyme catalyses a 2'-deoxyribonucleoside 5'-diphosphate + ATP = a 2'-deoxyribonucleoside 5'-triphosphate + ADP. It catalyses the reaction a ribonucleoside 5'-diphosphate + ATP = a ribonucleoside 5'-triphosphate + ADP. In terms of biological role, major role in the synthesis of nucleoside triphosphates other than ATP. The ATP gamma phosphate is transferred to the NDP beta phosphate via a ping-pong mechanism, using a phosphorylated active-site intermediate. The chain is Nucleoside diphosphate kinase from Frankia alni (strain DSM 45986 / CECT 9034 / ACN14a).